The primary structure comprises 561 residues: DNA mismatch repair protein MutL (561 aa).

The protein belongs to the DNA mismatch repair MutL/HexB family.

In terms of biological role, this protein is involved in the repair of mismatches in DNA. It is required for dam-dependent methyl-directed DNA mismatch repair. May act as a 'molecular matchmaker', a protein that promotes the formation of a stable complex between two or more DNA-binding proteins in an ATP-dependent manner without itself being part of a final effector complex. This chain is DNA mismatch repair protein MutL, found in Rippkaea orientalis (strain PCC 8801 / RF-1) (Cyanothece sp. (strain PCC 8801)).